A 70-amino-acid polypeptide reads, in one-letter code: MKLTCVAIVAVLLLTACQLITAEDSRGTQLHRALRKTTKLSVSTRCKGPGAKCLKTMYDCCKYSCSRGRC.

A signal peptide spans 1 to 22 (MKLTCVAIVAVLLLTACQLITA). A propeptide spanning residues 23–45 (EDSRGTQLHRALRKTTKLSVSTR) is cleaved from the precursor. Disulfide bonds link C46–C61, C53–C65, and C60–C70.

The protein belongs to the conotoxin O1 superfamily. In terms of tissue distribution, expressed by the venom duct.

The protein localises to the secreted. Omega-conotoxins act at presynaptic membranes, they bind and block voltage-gated calcium channels (Cav). This chain is Omega-conotoxin-like Bu1, found in Conus bullatus (Bubble cone).